The primary structure comprises 382 residues: Gap junction alpha-1 protein (382 aa).

Residues 2-23 (GGWSALAKLLGKVQAYSPAGGK) lie on the Cytoplasmic side of the membrane. The residue at position 5 (S5) is a Phosphoserine. The helical transmembrane segment at 24 to 44 (VWLSVLFIFRILLLGTAVESA) threads the bilayer. The Extracellular segment spans residues 45–76 (WGDEQSAFRCNTQQPGCENVCYDKSFPISHVR). Intrachain disulfides connect C54–C192 and C187–C198. A helical transmembrane segment spans residues 77 to 97 (FWVLQIIFVSVPTLLYLAHVF). The Cytoplasmic segment spans residues 98 to 155 (YVMRKEEKLNKKEEELKVAQTDGANVDMHLKQIEIKKFKYGIEEHGKVKMRGGLLRTY). K144 participates in a covalent cross-link: Glycyl lysine isopeptide (Lys-Gly) (interchain with G-Cter in SUMO). A helical transmembrane segment spans residues 156 to 176 (IISILFKSVFEVAFLLIQWYI). Over 177–207 (YGFSLSAVYTCKREPCPHQVDCFLSRPTEKT) the chain is Extracellular. The helical transmembrane segment at 208-228 (IFIIFMLVVSLVSLALNIIEL) threads the bilayer. Residues 229 to 382 (FYVFFKGVKD…SRPRPDDLEI (154 aa)) lie on the Cytoplasmic side of the membrane. K237 participates in a covalent cross-link: Glycyl lysine isopeptide (Lys-Gly) (interchain with G-Cter in SUMO). The tract at residues 244-382 (SDPYHATTGP…SRPRPDDLEI (139 aa)) is interaction with NOV. The residue at position 247 (Y247) is a Phosphotyrosine. S255, S257, and S262 each carry phosphoserine. The tract at residues 264–382 (EYAYFNGCSS…SRPRPDDLEI (119 aa)) is interaction with UBQLN4. The residue at position 271 (C271) is an S-nitrosocysteine. T275 carries the phosphothreonine modification. 2 positions are modified to phosphoserine: S306 and S314. The segment covering 317 to 332 (QNRMGQAGSTISNSHA) has biased composition (polar residues). Positions 317–382 (QNRMGQAGST…SRPRPDDLEI (66 aa)) are disordered. Residue S325 is modified to Phosphoserine; by CK1. T326 carries the post-translational modification Phosphothreonine. A phosphoserine; by CK1 mark is found at S328 and S330. Phosphoserine is present on residues S344 and S365. Low complexity predominate over residues 362-374 (RPSSRASSRASSR). A Phosphoserine; by PKC/PRKCG and PKC/PRKCD modification is found at S368. A phosphoserine mark is found at S369 and S373.

Belongs to the connexin family. Alpha-type (group II) subfamily. A connexon is composed of a hexamer of connexins. Interacts with SGSM3. Interacts with RIC1/CIP150. Interacts with CNST and CSNK1D. Interacts (via C-terminus) with TJP1. Interacts (via C-terminus) with SRC (via SH3 domain). Interacts (not ubiquitinated) with UBQLN4 (via UBA domain). Interacts with NOV. Interacts with TMEM65. Interacts with ANK3/ANKG and PKP2. Phosphorylation at Ser-325, Ser-328 and Ser-330 by CK1 modulates gap junction assembly. Phosphorylated at Ser-368 by PRKCG; phosphorylation induces disassembly of gap junction plaques and inhibition of gap junction activity. Phosphorylation at Ser-368 by PRKCD triggers its internalization into small vesicles leading to proteasome-mediated degradation. Post-translationally, sumoylated with SUMO1, SUMO2 and SUMO3, which may regulate the level of functional Cx43 gap junctions at the plasma membrane. May be desumoylated by SENP1 or SENP2. In terms of processing, S-nitrosylation at Cys-271 is enriched at the muscle endothelial gap junction in arteries, it augments channel permeability and may regulate of smooth muscle cell to endothelial cell communication. Acetylated in the developing cortex; leading to delocalization from the cell membrane.

The protein localises to the cell membrane. It is found in the cell junction. It localises to the gap junction. Its subcellular location is the endoplasmic reticulum. Its function is as follows. Gap junction protein that acts as a regulator of bladder capacity. A gap junction consists of a cluster of closely packed pairs of transmembrane channels, the connexons, through which materials of low MW diffuse from one cell to a neighboring cell. May play a critical role in the physiology of hearing by participating in the recycling of potassium to the cochlear endolymph. Negative regulator of bladder functional capacity: acts by enhancing intercellular electrical and chemical transmission, thus sensitizing bladder muscles to cholinergic neural stimuli and causing them to contract. May play a role in cell growth inhibition through the regulation of NOV expression and localization. Plays an essential role in gap junction communication in the ventricles. This chain is Gap junction alpha-1 protein (GJA1), found in Canis lupus familiaris (Dog).